The following is a 239-amino-acid chain: Immunoglobulin superfamily member 23 (239 aa).

A disordered region spans residues 63–93 (ELEAQPPTSSSPKGLPGRPRTSQEVPNAEDN). An Ig-like domain is found at 94-179 (PSLIPLVTFP…ELVSEPVTVS (86 aa)). The chain crosses the membrane as a helical span at residues 214–234 (LIVAATIGGLVLIGSVCFYIL).

The protein localises to the cell membrane. In terms of biological role, may be involved in osteoclast differentiation. This Mus musculus (Mouse) protein is Immunoglobulin superfamily member 23.